The sequence spans 297 residues: Release factor glutamine methyltransferase (297 aa).

S-adenosyl-L-methionine contacts are provided by residues 134-138, Asp-157, and Asn-200; that span reads GTGSG. Position 200–203 (200–203) interacts with substrate; the sequence is NPPY.

This sequence belongs to the protein N5-glutamine methyltransferase family. PrmC subfamily.

It catalyses the reaction L-glutaminyl-[peptide chain release factor] + S-adenosyl-L-methionine = N(5)-methyl-L-glutaminyl-[peptide chain release factor] + S-adenosyl-L-homocysteine + H(+). Its function is as follows. Methylates the class 1 translation termination release factors RF1/PrfA and RF2/PrfB on the glutamine residue of the universally conserved GGQ motif. The polypeptide is Release factor glutamine methyltransferase (Bradyrhizobium diazoefficiens (strain JCM 10833 / BCRC 13528 / IAM 13628 / NBRC 14792 / USDA 110)).